The following is a 258-amino-acid chain: Large ribosomal subunit protein bL21 (258 aa).

Over residues 140–159 (KAKDAKDEAPKAAPKAEKKK) the composition is skewed to basic and acidic residues. Residues 140–181 (KAKDAKDEAPKAAPKAEKKKAAPKKAKAEAAPAAADEGTRPA) are disordered.

The protein belongs to the bacterial ribosomal protein bL21 family. Part of the 50S ribosomal subunit. Contacts protein L20.

Functionally, this protein binds to 23S rRNA in the presence of protein L20. The polypeptide is Large ribosomal subunit protein bL21 (Jannaschia sp. (strain CCS1)).